We begin with the raw amino-acid sequence, 183 residues long: Apo-citrate lyase phosphoribosyl-dephospho-CoA transferase (183 aa).

Belongs to the CitX family.

The enzyme catalyses apo-[citrate lyase ACP] + 2'-(5''-triphospho-alpha-D-ribosyl)-3'-dephospho-CoA = holo-[citrate lyase ACP] + diphosphate. In terms of biological role, transfers 2-(5''-triphosphoribosyl)-3'-dephosphocoenzyme-A on a serine residue to the apo-acyl carrier protein (gamma chain) of the citrate lyase to yield holo-acyl carrier protein. This is Apo-citrate lyase phosphoribosyl-dephospho-CoA transferase from Escherichia coli O139:H28 (strain E24377A / ETEC).